Here is a 101-residue protein sequence, read N- to C-terminus: MAAKLKKGDKVVVLTGKDKGKQGEISSVNPSAGKAIVDGVNIAIRHTKQSQSNQGGRIPQPMPIQLSNLALLDANGKATRVGFKIEDGKKVRVAKTTGDVI.

It belongs to the universal ribosomal protein uL24 family. Part of the 50S ribosomal subunit.

Its function is as follows. One of two assembly initiator proteins, it binds directly to the 5'-end of the 23S rRNA, where it nucleates assembly of the 50S subunit. One of the proteins that surrounds the polypeptide exit tunnel on the outside of the subunit. This is Large ribosomal subunit protein uL24 from Jannaschia sp. (strain CCS1).